We begin with the raw amino-acid sequence, 189 residues long: GTPase NRas (189 aa).

GTP contacts are provided by residues 10–18 (GAGGVGKSA) and 29–30 (VD). The short motif at 32–40 (YDPTIEDSY) is the Effector region element. A GTP-binding site is contributed by 57 to 61 (DTAGQ). Position 89 is a phosphoserine (Ser89). 116-119 (NKCD) lines the GTP pocket. Residues 166-185 (YRMKKLNSSDDGTQGCLGLS) are hypervariable region. Lys170 is covalently cross-linked (Glycyl lysine isopeptide (Lys-Gly) (interchain with G-Cter in ubiquitin)). Cys181 carries the S-palmitoyl cysteine lipid modification. Cys186 carries S-farnesyl cysteine lipidation. Residues 187–189 (AVM) constitute a propeptide, removed in mature form.

Belongs to the small GTPase superfamily. Ras family. Interacts (active GTP-bound form preferentially) with RGS14. Interacts (active GTP-bound form) with RASSF7. Interacts (active GTP-bound form) with both SHOC2 and PP1c (all isoforms) to form a tertiary complex; SHOC2 and PP1c preferably bind M-Ras/MRAS, but they also bind K-Ras/KRAS, N-Ras/NRAS and H-Ras/HRAS. Post-translationally, palmitoylated by the ZDHHC9-GOLGA7 complex. Depalmitoylated by ABHD17A, ABHD17B and ABHD17C. A continuous cycle of de- and re-palmitoylation regulates rapid exchange between plasma membrane and Golgi. Acetylation at Lys-104 prevents interaction with guanine nucleotide exchange factors (GEFs). In terms of processing, ubiquitinated by the BCR(LZTR1) E3 ubiquitin ligase complex at Lys-170 in a non-degradative manner, leading to inhibit Ras signaling by decreasing Ras association with membranes. Post-translationally, phosphorylation at Ser-89 enhances NRAS association with its downstream effectors.

The protein localises to the cell membrane. Its subcellular location is the golgi apparatus membrane. It catalyses the reaction GTP + H2O = GDP + phosphate + H(+). With respect to regulation, alternates between an inactive form bound to GDP and an active form bound to GTP. Activated by a guanine nucleotide-exchange factor (GEF) and inactivated by a GTPase-activating protein (GAP). Ras proteins bind GDP/GTP and possess intrinsic GTPase activity. The chain is GTPase NRas (NRAS) from Monodelphis domestica (Gray short-tailed opossum).